The primary structure comprises 1108 residues: MERATQPRPRALLLLFLLLGCAAGISAVARARSLLAPTSDTAFGLGAAAAPTSAARVPAVATAEVTVEDAEALPAASGEQESRATESDDDVELRPRGRSLVIISTLDGRIAALDAENHGKKQWDLDVGSGSLVSSSLSKPEVFGNKMIIPSLDGDLFQWDRDRESMEAVPFTVESLLESSYKFGDDVVLVGGKSLTTYGLSAYSGKLRYICSALGCRRWDSDEMEEEEDILLLQRTQKTVRAVGPRSGSEKWNFSVGHFELRYIPDMETRAGFIESTFKLGGNKEDSKIISDVEEQDVDTVIKVSVADWKVMAFSKKGGRLEWEYQFCTPIASAWLVRDGKVIPISLFDDTSYTANEEVLEDEEDIVEAARGATENSVYLGMYRGQLYLQSSVRVSEKFPTRPKALESVNGESAIIPLPTIKWKPLIHSPSRTPVLVGSDEFDKCLSNDKYSHEEYSNGALSILQYPYDNGYYLPYYKRERNKRSTQITVRFLDSPHYSKNIRKKDPILLLHWWKEIFGTILLCIVATTFIVRRLFHPQPHRQRKESETQCQTESKYDSVSADNSDNSWNDIKHSGYVSRYLTDFEPIQCMGRGGFGVVFEAKNKVDDCNYAIKRIRLPNRELAREKVMREVKALAKLEHPGIVRYFNAWLETPPEKWQEEMDEIWLKDESTDWPLSSPSPMDAPSVKIRQMDPFSTKEQIEVIAPSPERSRSFSVGISCGRTSSSESQFSPLEFSGTDCGDNSDSEDAAHNLQDSCLTDCDMEDGTVDGDDEGHSFELCPSEASPYTRSREGTSSSIVFEDSGCDNASSKEDPRMNRLHNGHHYVNKLTEFKHSSSRSSSEATLSTSPTRPTTLSLDFTRNTVDRLQPSSPKVYLYIQMQLCRKENLKDWMNRRCSMEDREHRVCLHIFLQIAEAVQFLHSKGLMHRDLKPSNIFFTMDDVVKVGDFGLVTAMDQDEEEQTVLTPMPAYATHTGQVGTKLYMSPEQIHGNNYSHKVDIFSLGLILFELLYPFSTQMERVRTLTDVRNLKFPPLFTQKYPQEHMMVQDMLSPSPMERPEATDIIENAVFENLEFPGKTVLRQRSRSLSSSGTKHSRQPSSTFSPLPGN.

The signal sequence occupies residues 1 to 27 (MERATQPRPRALLLLFLLLGCAAGISA). Residues 28-506 (VARARSLLAP…HYSKNIRKKD (479 aa)) lie on the Lumenal side of the membrane. Residues 71–92 (EALPAASGEQESRATESDDDVE) form a disordered region. Asparagine 253 is a glycosylation site (N-linked (GlcNAc...) asparagine). The helical transmembrane segment at 507-527 (PILLLHWWKEIFGTILLCIVA) threads the bilayer. Over 528 to 1108 (TTFIVRRLFH…SSTFSPLPGN (581 aa)) the chain is Cytoplasmic. The segment at 542 to 563 (RQRKESETQCQTESKYDSVSAD) is disordered. Residues 585 to 1069 (FEPIQCMGRG…ATDIIENAVF (485 aa)) enclose the Protein kinase domain. ATP is bound at residue 591-599 (MGRGGFGVV). Residue tyrosine 611 is modified to Phosphotyrosine; by autocatalysis. Residue lysine 614 participates in ATP binding. The interval 639-880 (EHPGIVRYFN…SPKVYLYIQM (242 aa)) is insert loop. Serine 707 is modified (phosphoserine). Disordered stretches follow at residues 772-818 (DEGH…RMNR) and 832-856 (FKHS…TTLS). Over residues 785–798 (SPYTRSREGTSSSI) the composition is skewed to polar residues. The residue at position 794 (threonine 794) is a Phosphothreonine. A compositionally biased stretch (low complexity) spans 837–856 (SRSSSEATLSTSPTRPTTLS). Aspartate 929 (proton acceptor) is an active-site residue. Position 974 is a phosphothreonine (threonine 974). Positions 1080 to 1108 (LRQRSRSLSSSGTKHSRQPSSTFSPLPGN) are disordered. Serine 1086 bears the Phosphoserine mark. Polar residues predominate over residues 1097–1108 (QPSSTFSPLPGN).

It belongs to the protein kinase superfamily. Ser/Thr protein kinase family. GCN2 subfamily. Forms dimers with HSPA5/BIP in resting cells. Homotetramerizes in response to endoplasmic reticulum (ER) stress, leading to its activation. Interacts with HSP90B1/GRP94. Interacts with DNAJC3; inhibiting EIF2AK3/PERK activity. Interacts with ATAD3A; ATAD3A and EIF2S1/eIF-2-alpha occupy a common binding site within the cytoplasmic loop of EIF2AK3/PERK, leading to prevent EIF2AK3/PERK association with its substrate EIF2S1/eIF-2-alpha. Interacts with MFN2. Interacts with TMEM33. Interacts with PDIA6. Interacts with LACC1. Post-translationally, oligomerization of the N-terminal ER luminal domain by ER stress promotes EIF2AK3/PERK trans-autophosphorylation of the C-terminal cytoplasmic kinase domain at multiple residues including Thr-974 on the kinase activation loop. Autophosphorylated at Tyr-611 following endoplasmic reticulum stress, leading to activate its activity. Dephosphorylated at Tyr-611 by PTPN1/PTP1B, leading to inactivate its enzyme activity. Phosphorylation at Thr-794 by AKT (AKT1, AKT2 and/or AKT3) inactivates EIF2AK3/PERK. ADP-ribosylated by PARP16 upon ER stress, which increases kinase activity. As to expression, ubiquitous.

The protein resides in the endoplasmic reticulum membrane. It catalyses the reaction L-seryl-[protein] + ATP = O-phospho-L-seryl-[protein] + ADP + H(+). The enzyme catalyses L-threonyl-[protein] + ATP = O-phospho-L-threonyl-[protein] + ADP + H(+). The catalysed reaction is L-tyrosyl-[protein] + ATP = O-phospho-L-tyrosyl-[protein] + ADP + H(+). Inhibited by HSPA5/BIP in absence of stress. Perturbation in protein folding in the endoplasmic reticulum (ER) promotes reversible dissociation from HSPA5/BIP and oligomerization, resulting in trans-autophosphorylation and kinase activity induction. Inactivated following phosphorylation at Thr-794 by AKT (AKT1, AKT2 and/or AKT3). Inhibited by ATAD3A at mitochondria-endoplasmic reticulum contact sites, providing a safe haven for mitochondrial protein translation during ER stress. Metabolic-stress sensing protein kinase that phosphorylates the alpha subunit of eukaryotic translation initiation factor 2 (EIF2S1/eIF-2-alpha) in response to various stress, such as unfolded protein response (UPR). Key effector of the integrated stress response (ISR) to unfolded proteins: EIF2AK3/PERK specifically recognizes and binds misfolded proteins, leading to its activation and EIF2S1/eIF-2-alpha phosphorylation. EIF2S1/eIF-2-alpha phosphorylation in response to stress converts EIF2S1/eIF-2-alpha in a global protein synthesis inhibitor, leading to a global attenuation of cap-dependent translation, while concomitantly initiating the preferential translation of ISR-specific mRNAs, such as the transcriptional activators ATF4 and QRICH1, and hence allowing ATF4- and QRICH1-mediated reprogramming. The EIF2AK3/PERK-mediated unfolded protein response increases mitochondrial oxidative phosphorylation by promoting ATF4-mediated expression of COX7A2L/SCAF1, thereby increasing formation of respiratory chain supercomplexes. In contrast to most subcellular compartments, mitochondria are protected from the EIF2AK3/PERK-mediated unfolded protein response due to EIF2AK3/PERK inhibition by ATAD3A at mitochondria-endoplasmic reticulum contact sites. In addition to EIF2S1/eIF-2-alpha, also phosphorylates NFE2L2/NRF2 in response to stress, promoting release of NFE2L2/NRF2 from the BCR(KEAP1) complex, leading to nuclear accumulation and activation of NFE2L2/NRF2. Serves as a critical effector of unfolded protein response (UPR)-induced G1 growth arrest due to the loss of cyclin-D1 (CCND1). Involved in control of mitochondrial morphology and function. This chain is Eukaryotic translation initiation factor 2-alpha kinase 3 (Eif2ak3), found in Rattus norvegicus (Rat).